Here is a 689-residue protein sequence, read N- to C-terminus: Glycine--tRNA ligase beta subunit (689 aa).

It belongs to the class-II aminoacyl-tRNA synthetase family. Tetramer of two alpha and two beta subunits.

The protein resides in the cytoplasm. It carries out the reaction tRNA(Gly) + glycine + ATP = glycyl-tRNA(Gly) + AMP + diphosphate. This chain is Glycine--tRNA ligase beta subunit, found in Shewanella sediminis (strain HAW-EB3).